The primary structure comprises 111 residues: MGGKTVTRADLAEAVYRKVGLSRTESAQIVEMVLQEVCDAIVRGETVKLSSFATFQVREKNERVGRNPKTGEEVPISPRRVMTFKASNVLKSRILRAHQTRKPSKEATASS.

It belongs to the bacterial histone-like protein family. In terms of assembly, heterodimer of an alpha and a beta chain.

Functionally, this protein is one of the two subunits of integration host factor, a specific DNA-binding protein that functions in genetic recombination as well as in transcriptional and translational control. The polypeptide is Integration host factor subunit alpha (Chelativorans sp. (strain BNC1)).